The following is a 274-amino-acid chain: Undecaprenyl-diphosphatase (274 aa).

8 helical membrane passes run 1–21 (MDWL…FLPI), 42–62 (VKDT…LVYY), 81–101 (LWLG…LFGD), 107–127 (LFRP…MWLL), 142–162 (ISAG…LWPG), 184–204 (TKFS…LDFI), 213–233 (IGVV…YFAI), and 248–268 (FAVY…RGVL).

It belongs to the UppP family.

It is found in the cell membrane. The catalysed reaction is di-trans,octa-cis-undecaprenyl diphosphate + H2O = di-trans,octa-cis-undecaprenyl phosphate + phosphate + H(+). In terms of biological role, catalyzes the dephosphorylation of undecaprenyl diphosphate (UPP). Confers resistance to bacitracin. The chain is Undecaprenyl-diphosphatase from Deinococcus radiodurans (strain ATCC 13939 / DSM 20539 / JCM 16871 / CCUG 27074 / LMG 4051 / NBRC 15346 / NCIMB 9279 / VKM B-1422 / R1).